The following is a 247-amino-acid chain: Probable transcriptional regulatory protein Dalk_2958 (247 aa).

The protein belongs to the TACO1 family.

It is found in the cytoplasm. The sequence is that of Probable transcriptional regulatory protein Dalk_2958 from Desulfatibacillum aliphaticivorans.